The chain runs to 365 residues: Selina-4(15),7(11)-diene synthase ((2E,6E)-farnesyl diphosphate cyclizing) (365 aa).

Residues aspartate 82 and glutamate 87 each coordinate Mg(2+). Positions 82–87 (DDGHCE) match the DDXXXE motif motif. Residue arginine 178 participates in substrate binding. Positions 224 and 228 each coordinate Mg(2+). Substrate is bound at residue lysine 231. Glutamate 232 is a binding site for Mg(2+). 310 to 311 (RY) is a substrate binding site.

The protein belongs to the terpene synthase family. In terms of assembly, monomer. Mg(2+) serves as cofactor.

It catalyses the reaction (2E,6E)-farnesyl diphosphate = selina-4(15),7(11)-diene + diphosphate. The protein operates within secondary metabolite biosynthesis; terpenoid biosynthesis. Its function is as follows. Catalyzes the conversion of (2E,6E)-farnesyl diphosphate (FPP) to yield the bicyclic sesquiterpene selina-4(15),7(11)-diene via a 1,10-cyclization, which requires the abstraction of the pyrophosphate from FPP leading to a (E,E)-germacradienyl cation. The only accepted substrate is (2E,6E)-farnesyl diphosphate (FPP). This chain is Selina-4(15),7(11)-diene synthase ((2E,6E)-farnesyl diphosphate cyclizing), found in Streptomyces pristinaespiralis (strain ATCC 25486 / DSM 40338 / CBS 914.69 / JCM 4507 / KCC S-0507 / NBRC 13074 / NRRL 2958 / 5647).